The following is a 492-amino-acid chain: Aspartyl/glutamyl-tRNA(Asn/Gln) amidotransferase subunit B (492 aa).

This sequence belongs to the GatB/GatE family. GatB subfamily. In terms of assembly, heterotrimer of A, B and C subunits.

The enzyme catalyses L-glutamyl-tRNA(Gln) + L-glutamine + ATP + H2O = L-glutaminyl-tRNA(Gln) + L-glutamate + ADP + phosphate + H(+). It catalyses the reaction L-aspartyl-tRNA(Asn) + L-glutamine + ATP + H2O = L-asparaginyl-tRNA(Asn) + L-glutamate + ADP + phosphate + 2 H(+). Its function is as follows. Allows the formation of correctly charged Asn-tRNA(Asn) or Gln-tRNA(Gln) through the transamidation of misacylated Asp-tRNA(Asn) or Glu-tRNA(Gln) in organisms which lack either or both of asparaginyl-tRNA or glutaminyl-tRNA synthetases. The reaction takes place in the presence of glutamine and ATP through an activated phospho-Asp-tRNA(Asn) or phospho-Glu-tRNA(Gln). This is Aspartyl/glutamyl-tRNA(Asn/Gln) amidotransferase subunit B from Azorhizobium caulinodans (strain ATCC 43989 / DSM 5975 / JCM 20966 / LMG 6465 / NBRC 14845 / NCIMB 13405 / ORS 571).